The sequence spans 75 residues: Large ribosomal subunit protein bL28 (75 aa).

The protein belongs to the bacterial ribosomal protein bL28 family.

This chain is Large ribosomal subunit protein bL28, found in Buchnera aphidicola subsp. Acyrthosiphon pisum (strain APS) (Acyrthosiphon pisum symbiotic bacterium).